Reading from the N-terminus, the 879-residue chain is Alanine--tRNA ligase (879 aa).

Zn(2+) contacts are provided by His565, His569, Cys674, and His678.

It belongs to the class-II aminoacyl-tRNA synthetase family. Zn(2+) serves as cofactor.

The protein resides in the cytoplasm. The catalysed reaction is tRNA(Ala) + L-alanine + ATP = L-alanyl-tRNA(Ala) + AMP + diphosphate. Catalyzes the attachment of alanine to tRNA(Ala) in a two-step reaction: alanine is first activated by ATP to form Ala-AMP and then transferred to the acceptor end of tRNA(Ala). Also edits incorrectly charged Ser-tRNA(Ala) and Gly-tRNA(Ala) via its editing domain. In Gluconobacter oxydans (strain 621H) (Gluconobacter suboxydans), this protein is Alanine--tRNA ligase.